The primary structure comprises 309 residues: Prephenate dehydratase (309 aa).

The region spanning 3-191 is the Prephenate dehydratase domain; that stretch reads GIAYLGPEGT…ARTRFVLVGC (189 aa). In terms of domain architecture, ACT spans 205–282; the sequence is SVVLRLDNVP…ADVRYLGSWP (78 aa).

In terms of assembly, homodimer.

The catalysed reaction is prephenate + H(+) = 3-phenylpyruvate + CO2 + H2O. Its pathway is amino-acid biosynthesis; L-phenylalanine biosynthesis; phenylpyruvate from prephenate: step 1/1. This Mycolicibacterium gilvum (strain PYR-GCK) (Mycobacterium gilvum (strain PYR-GCK)) protein is Prephenate dehydratase (pheA).